We begin with the raw amino-acid sequence, 301 residues long: Probable alpha-L-glutamate ligase (301 aa).

Residues 104–287 (LQLLARKGVG…VAGMIINWTE (184 aa)) enclose the ATP-grasp domain. Residues K141, 178 to 179 (EF), D187, and 211 to 213 (RSN) contribute to the ATP site. Residues D248, E260, and N262 each contribute to the Mg(2+) site. Residues D248, E260, and N262 each coordinate Mn(2+).

Belongs to the RimK family. Mg(2+) serves as cofactor. It depends on Mn(2+) as a cofactor.

This is Probable alpha-L-glutamate ligase from Marinobacter nauticus (strain ATCC 700491 / DSM 11845 / VT8) (Marinobacter aquaeolei).